The following is a 310-amino-acid chain: Phosphoribosylaminoimidazole-succinocarboxamide synthase (310 aa).

The protein belongs to the SAICAR synthetase family.

The catalysed reaction is 5-amino-1-(5-phospho-D-ribosyl)imidazole-4-carboxylate + L-aspartate + ATP = (2S)-2-[5-amino-1-(5-phospho-beta-D-ribosyl)imidazole-4-carboxamido]succinate + ADP + phosphate + 2 H(+). The protein operates within purine metabolism; IMP biosynthesis via de novo pathway; 5-amino-1-(5-phospho-D-ribosyl)imidazole-4-carboxamide from 5-amino-1-(5-phospho-D-ribosyl)imidazole-4-carboxylate: step 1/2. This Xanthomonas oryzae pv. oryzae (strain MAFF 311018) protein is Phosphoribosylaminoimidazole-succinocarboxamide synthase.